The following is a 322-amino-acid chain: DNA primase small subunit PriS (322 aa).

Residues Asp-100, Asp-102, and Asp-228 contribute to the active site.

It belongs to the eukaryotic-type primase small subunit family. Heterodimer of a small subunit (PriS) and a large subunit (PriL). Mg(2+) serves as cofactor. Mn(2+) is required as a cofactor.

In terms of biological role, catalytic subunit of DNA primase, an RNA polymerase that catalyzes the synthesis of short RNA molecules used as primers for DNA polymerase during DNA replication. The small subunit contains the primase catalytic core and has DNA synthesis activity on its own. Binding to the large subunit stabilizes and modulates the activity, increasing the rate of DNA synthesis while decreasing the length of the DNA fragments, and conferring RNA synthesis capability. The DNA polymerase activity may enable DNA primase to also catalyze primer extension after primer synthesis. May also play a role in DNA repair. This chain is DNA primase small subunit PriS, found in Sulfolobus acidocaldarius (strain ATCC 33909 / DSM 639 / JCM 8929 / NBRC 15157 / NCIMB 11770).